Here is a 293-residue protein sequence, read N- to C-terminus: Protease HtpX (293 aa).

The next 2 helical transmembrane spans lie at 4–24 and 34–54; these read IALF…VLSL and GLMI…LLMS. Residue H139 coordinates Zn(2+). Residue E140 is part of the active site. H143 provides a ligand contact to Zn(2+). 2 helical membrane-spanning segments follow: residues 158–178 and 193–213; these read VVNT…AGFM and LIYF…ASII. E222 provides a ligand contact to Zn(2+).

The protein belongs to the peptidase M48B family. Requires Zn(2+) as cofactor.

It localises to the cell inner membrane. The protein is Protease HtpX of Escherichia fergusonii (strain ATCC 35469 / DSM 13698 / CCUG 18766 / IAM 14443 / JCM 21226 / LMG 7866 / NBRC 102419 / NCTC 12128 / CDC 0568-73).